The sequence spans 938 residues: MSDYKSTLNLPETGFPMRGDLAKREPGMLARWTDDDLYGIIRAAKKGKKTFILHDGPPYANGSIHIGHSVNKILKDIIVKSKGLSGYDSPYVPGWDCHGLPIELKVEQEYGKPGEKFTAAEFRAKCREYAATQVDGQRKDFIRLGVLGDWSHPYLTMDFKTEANIIRALGKIIGNGHLHKGAKPVHWCVDCRSALAEAEVEYYDKTSPSIDVAFQAVDQDALKAKFAVSNVNGPISLVIWTTTPWTLPANRAISIAPDFDYALVQIDGQAVILAKDLVESVMQRIGVTDYTILGTVKGAELELLRFTHPFMGFDVPAILGDHVTLDAGTGAVHTAPGHGPDDYVIGQKYGLETANPVGPDGTYLPGTYPTLDGVNVFKANDIVVALLQEKGALLHVEKMQHSYPCCWRHKTPIIFRATPQWFVSMDQKGLRAQSLKEIKGVQWIPDWGQARIESMVANRPDWCISRQRTWGVPMSLFVHKDTEELHPRTLELMEEVAKRVEVDGIQAWWDLDAKEILGDEADQYVKVPDTLDVWFDSGSTHSSVVDVRPEFAGHAADMYLEGSDQHRGWFMSSLMISTAMKGKAPYRQVLTHGFTVDGQGRKMSKSIGNTVSPQDVMNKLGADILRLWVASTDYTGEMAVSDEILKRAADSYRRIRNTARFLLANLNGFDPAKDMVKPEEMVVLDRWAVGCAKAAQEDILKAYEAYDFHEVVQRLMRFCSVEMGSFYLDIIKDRQYTAKADSVARRSCQTALYHIAEALVRWMAPILSFTADEVWGYLPGEREKYVFTGEWYEGLFGLADSEAMNDAFWDELLKVRGEVNKVIEQARADKKVGGSLEAAVTLYAEPELSAKLTALGDELRFVLLTSGATVADYNDAPADAQQSEVLKGLKVALSKAEGEKCPRCWHYTQDVGKVAEHAEICGRCVSNVAGDGEKRKFA.

The short motif at 58–68 (PYANGSIHIGH) is the 'HIGH' region element. Lys183 bears the N6-acetyllysine mark. Position 561 (Glu561) interacts with L-isoleucyl-5'-AMP. Positions 602 to 606 (KMSKS) match the 'KMSKS' region motif. Lys605 lines the ATP pocket. The Zn(2+) site is built by Cys901, Cys904, Cys921, and Cys924.

The protein belongs to the class-I aminoacyl-tRNA synthetase family. IleS type 1 subfamily. As to quaternary structure, monomer. Requires Zn(2+) as cofactor.

It is found in the cytoplasm. The enzyme catalyses tRNA(Ile) + L-isoleucine + ATP = L-isoleucyl-tRNA(Ile) + AMP + diphosphate. Catalyzes the attachment of isoleucine to tRNA(Ile). As IleRS can inadvertently accommodate and process structurally similar amino acids such as valine, to avoid such errors it has two additional distinct tRNA(Ile)-dependent editing activities. One activity is designated as 'pretransfer' editing and involves the hydrolysis of activated Val-AMP. The other activity is designated 'posttransfer' editing and involves deacylation of mischarged Val-tRNA(Ile). The chain is Isoleucine--tRNA ligase from Escherichia coli (strain 55989 / EAEC).